The sequence spans 455 residues: uncharacterized protein (455 aa).

A signal peptide spans 1–24 (MKTTKILLHTGVLALSLLATQVMA).

This is an uncharacterized protein from Pseudomonas aeruginosa (strain ATCC 15692 / DSM 22644 / CIP 104116 / JCM 14847 / LMG 12228 / 1C / PRS 101 / PAO1).